A 506-amino-acid chain; its full sequence is RNA-splicing ligase RtcB homolog (506 aa).

Aspartate 120, cysteine 123, histidine 228, histidine 260, and histidine 354 together coordinate Mn(2+). 227–231 (NHYAE) serves as a coordination point for GMP. GMP contacts are provided by residues 354–355 (HN), 403–406 (GGTM), serine 410, 429–432 (HGAG), and lysine 505. The active-site GMP-histidine intermediate is the histidine 429.

The protein belongs to the RtcB family. In terms of assembly, catalytic component of the tRNA-splicing ligase complex. Mn(2+) serves as cofactor.

The enzyme catalyses a 3'-end 3'-phospho-ribonucleotide-RNA + a 5'-end dephospho-ribonucleoside-RNA + GTP = a ribonucleotidyl-ribonucleotide-RNA + GMP + diphosphate. It carries out the reaction a 3'-end 2',3'-cyclophospho-ribonucleotide-RNA + a 5'-end dephospho-ribonucleoside-RNA + GTP + H2O = a ribonucleotidyl-ribonucleotide-RNA + GMP + diphosphate + H(+). Catalytic subunit of the tRNA-splicing ligase complex that acts by directly joining spliced tRNA halves to mature-sized tRNAs by incorporating the precursor-derived splice junction phosphate into the mature tRNA as a canonical 3',5'-phosphodiester. May act as an RNA ligase with broad substrate specificity, and may function toward other RNAs. The protein is RNA-splicing ligase RtcB homolog of Drosophila melanogaster (Fruit fly).